Here is a 471-residue protein sequence, read N- to C-terminus: Citrate synthase, mitochondrial (471 aa).

The transit peptide at 1 to 18 (MASLRSATALSRLRSRAG) directs the protein to the mitochondrion. Residues histidine 307, histidine 353, and aspartate 408 contribute to the active site.

It belongs to the citrate synthase family. In terms of assembly, homodimer.

The protein resides in the mitochondrion matrix. It catalyses the reaction oxaloacetate + acetyl-CoA + H2O = citrate + CoA + H(+). It participates in carbohydrate metabolism; tricarboxylic acid cycle; isocitrate from oxaloacetate: step 1/2. The chain is Citrate synthase, mitochondrial (CIT) from Citrus maxima (Pomelo).